Consider the following 124-residue polypeptide: Putative membrane protein insertion efficiency factor (124 aa).

A compositionally biased stretch (basic and acidic residues) spans 1–12 (MCPQPHADHAIT). Residues 1–26 (MCPQPHADHAITRGDTGAAGGRNWSG) are disordered.

Belongs to the UPF0161 family.

The protein localises to the cell inner membrane. Functionally, could be involved in insertion of integral membrane proteins into the membrane. In Rhizobium meliloti (strain 1021) (Ensifer meliloti), this protein is Putative membrane protein insertion efficiency factor.